Consider the following 8545-residue polypeptide: Nuclear anchorage protein 1 (8545 aa).

The tract at residues 1–325 (MSSSPPARPC…VITYVSQFVR (325 aa)) is actin-binding. Over 1–8494 (MSSSPPARPC…QRSRWRRVLR (8494 aa)) the chain is Cytoplasmic. Positions 23–130 (KAQKNTFTRW…LIWQIILHFQ (108 aa)) constitute a Calponin-homology (CH) 1 domain. A disordered region spans residues 148 to 197 (TEEPTSSAQPEVVVTAPSPTPSSKKSHSKVSSLSGSKTSLASGEKAPSSP). A compositionally biased stretch (low complexity) spans 159–190 (VVVTAPSPTPSSKKSHSKVSSLSGSKTSLASG). The Calponin-homology (CH) 2 domain occupies 222–328 (QSVEQVFLRW…YVSQFVRMFG (107 aa)). Coiled coils occupy residues 754–774 (NIRD…NHSR), 1072–1101 (SFFQ…LMVH), 1215–1236 (ADIL…EIQA), 1324–1384 (DTKK…QFED), 1574–1629 (RSIE…DLVK), 1725–1754 (ENRN…YEDA), 1950–1981 (PAII…NYNQ), 2103–2580 (DNIE…KKSD), 2682–2712 (SVKE…KIAK), 2852–2949 (IMQE…NIGK), 3002–3119 (DQIV…KTVV), 3178–3295 (DDEK…DEFK), 3346–3417 (QLQH…PEND), 3482–3552 (DELI…EKSL), 3587–3703 (KAEE…ELLD), 3781–3839 (ALKA…KEQL), 3902–4022 (AAHD…KTVV), 4114–4198 (LDVA…DEFK), and 4249–4320 (QLQH…PEND). A compositionally biased stretch (basic and acidic residues) spans 3010–3019 (EAEDVTAKES). Residues 3010–3033 (EAEDVTAKESAKKKKKDKKKSPQE) form a disordered region. 6 consecutive repeat copies span residues 3241 to 4143 (QVAK…KIDP), 4144 to 5097 (QVAK…KIDP), 5098 to 6000 (QVAK…KIDP), 6001 to 6903 (QVAK…KIDP), 6904 to 7806 (QVAK…KIDP), and 7807 to 8199 (QVAK…EERA). The tract at residues 3241 to 8199 (QVAKDIKDSK…TLIPDLEERA (4959 aa)) is 6 X tandem repeat. A compositionally biased stretch (basic and acidic residues) spans 3913 to 3922 (EAEDVTAKES). Positions 3913-3936 (EAEDVTAKESAKKKKKDKKKSPQE) are disordered. Positions 4372–4393 (ITREDGGDDNKSPDELIDDRGR) are enriched in basic and acidic residues. A disordered region spans residues 4372 to 4395 (ITREDGGDDNKSPDELIDDRGRST). 28 coiled-coil regions span residues 4436–4506 (DELI…EKSL), 4541–4657 (KAEE…ELLD), 4735–4793 (ALKA…KEQL), 4856–4976 (AAHD…KTVV), 5035–5152 (DDEK…DEFK), 5203–5274 (QLQH…PEND), 5339–5409 (DELI…EKSL), 5444–5560 (KAEE…ELLD), 5638–5696 (ALKA…KEQL), 5759–5879 (AAHD…KTVV), 5938–6055 (DDEK…DEFK), 6106–6177 (QLQH…PEND), 6242–6312 (DELI…EKSL), 6347–6463 (KAEE…ELLD), 6541–6599 (ALKA…KEQL), 6662–6782 (AAHD…KTVV), 6841–6958 (DDEK…DEFK), 7009–7080 (QLQH…PEND), 7145–7215 (DELI…EKSL), 7250–7366 (KAEE…ELLD), 7444–7502 (ALKA…KEQL), 7565–7685 (AAHD…KTVV), 7744–7861 (DDEK…DEFK), 7912–7983 (QLQH…PEND), 8048–8118 (DELI…EKSL), 8153–8204 (KAEE…IWER), 8273–8329 (VAED…DINN), and 8370–8390 (STSI…KEIE). The span at 4867 to 4876 (EAEDVTAKES) shows a compositional bias: basic and acidic residues. A disordered region spans residues 4867–4890 (EAEDVTAKESAKKKKKDKKKSPQE). Residues 5770–5779 (EAEDVTAKES) show a composition bias toward basic and acidic residues. The tract at residues 5770–5793 (EAEDVTAKESAKKKKKDKKKSPQE) is disordered. The span at 6673-6682 (EAEDVTAKES) shows a compositional bias: basic and acidic residues. Residues 6673-6696 (EAEDVTAKESAKKKKKDKKKSPQE) are disordered. A compositionally biased stretch (basic and acidic residues) spans 7576-7585 (EAEDVTAKES). The interval 7576-7599 (EAEDVTAKESAKKKKKDKKKSPQE) is disordered. Disordered stretches follow at residues 8391 to 8418 (PRLQ…KPYD) and 8449 to 8480 (SDSE…LSEE). Residues 8401–8411 (DNEDDEDEEKG) are compositionally biased toward acidic residues. The segment covering 8451 to 8464 (SESRSEFDSLDSRS) has biased composition (basic and acidic residues). The 60-residue stretch at 8486–8545 (RSRWRRVLRTALPLQALLVLLMGAACLVPHCDDEYCCQLLNNFAKSFDPSLEFVNGPPPF) folds into the KASH domain. A helical; Anchor for type IV membrane protein transmembrane segment spans residues 8495–8513 (TALPLQALLVLLMGAACLV). The Perinuclear space portion of the chain corresponds to 8514–8545 (PHCDDEYCCQLLNNFAKSFDPSLEFVNGPPPF).

The protein belongs to the nesprin family. As to quaternary structure, interacts with F-actin via its N-terminal domain. Most likely interacts with unc-84; the interaction is probably required to recruit anc-1 to the nuclear envelope. Ubiquitously expressed in all postembryonic cells.

Its subcellular location is the nucleus outer membrane. The protein resides in the cytoplasm. It localises to the cytoskeleton. In terms of biological role, plays a central role in nuclear and mitochondrial anchoring. Probably connects nuclei to the cytoskeleton by interacting with unc-84 at the nuclear envelope and with F-actin in the cytoplasm, creating a bridge across the nuclear envelope between the cytoskeleton and the nucleus. Has a role in positioning of the cell body of the PVQ lumbar interneuron. The protein is Nuclear anchorage protein 1 of Caenorhabditis elegans.